The primary structure comprises 46 residues: MNNWWVYPCFEIDVVASGFDLPVAIAFPSEQRKGKNDVVELYGKVK.

This is an uncharacterized protein from Archaeoglobus fulgidus (strain ATCC 49558 / DSM 4304 / JCM 9628 / NBRC 100126 / VC-16).